The following is a 271-amino-acid chain: RELT-like protein 1 (271 aa).

The N-terminal stretch at 1 to 23 (MAPRGLPGSAVLAAAVFVGGAVS) is a signal peptide. Over 24-57 (SPLVRSDHSGSHPLPSKTETTPSPTNNNGNGHPE) the chain is Extracellular. Residues 27–52 (VRSDHSGSHPLPSKTETTPSPTNNNG) are disordered. The span at 36-52 (PLPSKTETTPSPTNNNG) shows a compositional bias: low complexity. The helical transmembrane segment at 58 to 78 (YIAYALVPVFFVMGLFGVLIC) threads the bilayer. At 79-271 (HLLKKKGYRC…PVKRQQSDSE (193 aa)) the chain is on the cytoplasmic side. Phosphoserine occurs at positions 109 and 114. Disordered regions lie at residues 144-168 (CDPESPVTPSTPGSPPVSPGPLSPG) and 231-271 (TKVE…SDSE). Residues 155–165 (PGSPPVSPGPL) show a composition bias toward pro residues. Over residues 231–244 (TKVEPKSNQKERRS) the composition is skewed to basic and acidic residues. Phosphoserine is present on residues Ser-244 and Ser-247.

It belongs to the RELT family. As to quaternary structure, interacts with RELT, RELL2, OXSR1 and PLSCR1.

It is found in the cell membrane. Its function is as follows. Induces activation of MAPK14/p38 cascade, when overexpressed. Induces apoptosis, when overexpressed. In Bos taurus (Bovine), this protein is RELT-like protein 1 (RELL1).